Reading from the N-terminus, the 445-residue chain is Phosphoglucosamine mutase (445 aa).

The active-site Phosphoserine intermediate is serine 102. Serine 102, aspartate 240, aspartate 242, and aspartate 244 together coordinate Mg(2+). Residue serine 102 is modified to Phosphoserine.

Belongs to the phosphohexose mutase family. It depends on Mg(2+) as a cofactor. In terms of processing, activated by phosphorylation.

It carries out the reaction alpha-D-glucosamine 1-phosphate = D-glucosamine 6-phosphate. Functionally, catalyzes the conversion of glucosamine-6-phosphate to glucosamine-1-phosphate. The sequence is that of Phosphoglucosamine mutase from Mycolicibacterium vanbaalenii (strain DSM 7251 / JCM 13017 / BCRC 16820 / KCTC 9966 / NRRL B-24157 / PYR-1) (Mycobacterium vanbaalenii).